The sequence spans 578 residues: Cholesterol oxidase (578 aa).

Positions 15, 34, 85, 90, and 230 each coordinate FAD. H470 functions as the Proton acceptor in the catalytic mechanism. Residue G503 participates in FAD binding. Positions 529-551 (WPNKGETDRRPPQGEPYRRLAPI) are disordered. Positions 533–546 (GETDRRPPQGEPYR) are enriched in basic and acidic residues.

This sequence belongs to the GMC oxidoreductase family. It depends on FAD as a cofactor.

It localises to the secreted. The enzyme catalyses cholesterol + O2 = cholest-5-en-3-one + H2O2. The catalysed reaction is cholest-5-en-3-one = cholest-4-en-3-one. It functions in the pathway steroid metabolism; cholesterol degradation. Bifunctional enzyme that catalyzes the oxidation and isomerization of cholesterol to cholestenone (cholest-4-en-3-one), an initial step in the cholesterol degradation process. Contributes to virulence. In Mycobacterium tuberculosis (strain CDC 1551 / Oshkosh), this protein is Cholesterol oxidase (choD).